The following is a 719-amino-acid chain: MHYVVLELQVAHLPDTPKDQCRIANIAFQIVNAETLVCHYGTNSLPSIEVNGTTKSLESAMVQLDKDIHDVIGNDDFVLVSLYSTWHIRVTLPRQARDDGFILTSYLQHPKVFDLWKEFDRWCVNHPEILGQKKAISNNNCNTKSISINAAKNTKDLDEIVRILEVSIPTEEAGSVPEIYSLLKRTTDILIQLHKKCTSPEDMESVLTKPYDSHTDIRAFLQEKSKILYMNNLPPDTTQSELESWFTQYGVRPVGFWTVKNIVEDTSNVNNNWSLNNSPYVEDQDSISGFVVFQTHEEATEVLALNGRSILSNLANTKQPRVVEHVLELQPSSTGVLDKAQEILSPFPQSKNKPRPGDWNCPSCGFSNFQRRTACFRCSFPAPSNSQIHTANSNNNVNSSRNNLNNRVNSGSSSNISNTAANHPYGAPEFNMIANNTPAALTYNRAHFPAITPLSRQNSLNMAPSNSGSPIIIADHFSGNNNIAPNYRYNNNINNNNNNINNMTNNRYNINNNINGNGNGNGNNSNNNNNHNNNHNNNHHNGSINSNSNTNNNNNNNNGNNSNNCNSNIGMGGCGSNMPFRAGDWKCSTCTYHNFAKNVVCLRCGGPKSISGDASETNHYIDSSTFGPASRTPSNNNISVNTNGGSNAGRTDGNDNKGRDISLMEFMSPPLSMATKSMKEGDGNGSSFNEFKSDKANVNFSNVGDNSAFGNGFNSSIRW.

An RRM domain is found at 226–322 (KILYMNNLPP…NLANTKQPRV (97 aa)). Ser-345 is modified (phosphoserine). The RanBP2-type 1 zinc-finger motif lies at 355 to 384 (RPGDWNCPSCGFSNFQRRTACFRCSFPAPS). The tract at residues 389 to 415 (HTANSNNNVNSSRNNLNNRVNSGSSSN) is disordered. A compositionally biased stretch (low complexity) spans 392–415 (NSNNNVNSSRNNLNNRVNSGSSSN). Phosphoserine is present on Ser-455. Positions 511 to 561 (NNNINGNGNGNGNNSNNNNNHNNNHNNNHHNGSINSNSNTNNNNNNNNGNN) are disordered. Residues 581-610 (RAGDWKCSTCTYHNFAKNVVCLRCGGPKSI) form a RanBP2-type 2 zinc finger. Residues 622 to 649 (DSSTFGPASRTPSNNNISVNTNGGSNAG) show a composition bias toward polar residues. The interval 622 to 661 (DSSTFGPASRTPSNNNISVNTNGGSNAGRTDGNDNKGRDI) is disordered. A Phosphoserine modification is found at Ser-630. Residues 652-661 (DGNDNKGRDI) show a composition bias toward basic and acidic residues.

It localises to the chromosome. The protein resides in the nucleus. Functionally, may play a role in chromatin organization. The sequence is that of Putative RNA-binding protein involved in heterochromatin assembly from Saccharomyces cerevisiae (strain ATCC 204508 / S288c) (Baker's yeast).